A 1073-amino-acid polypeptide reads, in one-letter code: Error-prone DNA polymerase (1073 aa).

Residues 41–73 (EAEPECLSTPRPGPGSTEVPGERRGSRQGERSG) are disordered. A compositionally biased stretch (basic and acidic residues) spans 60–73 (PGERRGSRQGERSG).

Belongs to the DNA polymerase type-C family. DnaE2 subfamily.

It localises to the cytoplasm. It catalyses the reaction DNA(n) + a 2'-deoxyribonucleoside 5'-triphosphate = DNA(n+1) + diphosphate. Functionally, DNA polymerase involved in damage-induced mutagenesis and translesion synthesis (TLS). It is not the major replicative DNA polymerase. In Corynebacterium efficiens (strain DSM 44549 / YS-314 / AJ 12310 / JCM 11189 / NBRC 100395), this protein is Error-prone DNA polymerase.